The sequence spans 84 residues: Small ribosomal subunit protein uS17 (84 aa).

It belongs to the universal ribosomal protein uS17 family. Part of the 30S ribosomal subunit.

Its function is as follows. One of the primary rRNA binding proteins, it binds specifically to the 5'-end of 16S ribosomal RNA. This is Small ribosomal subunit protein uS17 from Vibrio parahaemolyticus serotype O3:K6 (strain RIMD 2210633).